The sequence spans 504 residues: Maturase K (504 aa).

It belongs to the intron maturase 2 family. MatK subfamily.

It localises to the plastid. The protein localises to the chloroplast. Usually encoded in the trnK tRNA gene intron. Probably assists in splicing its own and other chloroplast group II introns. This Rorippa amphibia (Great yellow-cress) protein is Maturase K.